The primary structure comprises 256 residues: MNNEVFPNKFKAALAAHQVQIGCWSALANPISTEVLGLAGFDWLVLDGEHAPNDVTTLIPQLMALKGSISAPVVRVPTNEPVIIKRMLDIGFYNFLIPFVETKEQAINAVAATRYPPEGIRGVSVSHRANMFGTVPDYFVQSNKNITILVQIESQLGVDNVDAIAATEGVDGIFVGPSDLAAALGHLGNASHPQVQKAIQHIFARAKANGKPSGILAPVEADARRYLEWGATFVAVGSDLGVFRTGTQRLADSFKK.

Histidine 50 functions as the Proton acceptor in the catalytic mechanism. Glutamine 151 provides a ligand contact to substrate. Residue glutamate 153 participates in Mg(2+) binding. The substrate site is built by serine 178 and aspartate 179. Mg(2+) is bound at residue aspartate 179.

The protein belongs to the HpcH/HpaI aldolase family. KDGluc aldolase subfamily. Homohexamer; trimer of dimers. Mg(2+) serves as cofactor.

The catalysed reaction is 5-dehydro-4-deoxy-D-glucarate = 2-hydroxy-3-oxopropanoate + pyruvate. It carries out the reaction 2-dehydro-3-deoxy-D-glucarate = 2-hydroxy-3-oxopropanoate + pyruvate. It functions in the pathway carbohydrate acid metabolism; galactarate degradation; D-glycerate from galactarate: step 2/3. Catalyzes the reversible retro-aldol cleavage of both 5-keto-4-deoxy-D-glucarate and 2-keto-3-deoxy-D-glucarate to pyruvate and tartronic semialdehyde. In Escherichia fergusonii (strain ATCC 35469 / DSM 13698 / CCUG 18766 / IAM 14443 / JCM 21226 / LMG 7866 / NBRC 102419 / NCTC 12128 / CDC 0568-73), this protein is 5-keto-4-deoxy-D-glucarate aldolase.